The sequence spans 361 residues: Phospho-N-acetylmuramoyl-pentapeptide-transferase (361 aa).

A run of 10 helical transmembrane segments spans residues 27–47 (ILAS…MIRW), 70–90 (GTPT…CLLW), 97–117 (SLWL…VDDY), 134–154 (YFWQ…NASL), 167–187 (TVTW…IVGS), 199–219 (GLAI…AYAS), 236–256 (TGEL…FLWY), 263–283 (VFMG…VAVV), 288–308 (LVLL…ILQV), and 338–358 (KVIV…LATL).

The protein belongs to the glycosyltransferase 4 family. MraY subfamily. Mg(2+) is required as a cofactor.

It localises to the cell inner membrane. It carries out the reaction UDP-N-acetyl-alpha-D-muramoyl-L-alanyl-gamma-D-glutamyl-meso-2,6-diaminopimeloyl-D-alanyl-D-alanine + di-trans,octa-cis-undecaprenyl phosphate = di-trans,octa-cis-undecaprenyl diphospho-N-acetyl-alpha-D-muramoyl-L-alanyl-D-glutamyl-meso-2,6-diaminopimeloyl-D-alanyl-D-alanine + UMP. It functions in the pathway cell wall biogenesis; peptidoglycan biosynthesis. Its function is as follows. Catalyzes the initial step of the lipid cycle reactions in the biosynthesis of the cell wall peptidoglycan: transfers peptidoglycan precursor phospho-MurNAc-pentapeptide from UDP-MurNAc-pentapeptide onto the lipid carrier undecaprenyl phosphate, yielding undecaprenyl-pyrophosphoryl-MurNAc-pentapeptide, known as lipid I. This Legionella pneumophila (strain Lens) protein is Phospho-N-acetylmuramoyl-pentapeptide-transferase.